Consider the following 248-residue polypeptide: Small ribosomal subunit protein uS2 (248 aa).

This sequence belongs to the universal ribosomal protein uS2 family.

The sequence is that of Small ribosomal subunit protein uS2 from Leptothrix cholodnii (strain ATCC 51168 / LMG 8142 / SP-6) (Leptothrix discophora (strain SP-6)).